Here is a 622-residue protein sequence, read N- to C-terminus: 1-deoxy-D-xylulose-5-phosphate synthase (622 aa).

Thiamine diphosphate contacts are provided by residues His-80 and 121 to 123 (GHS). Asp-152 lines the Mg(2+) pocket. Residues 153–154 (GA), Asn-181, Tyr-288, and Glu-370 contribute to the thiamine diphosphate site. Asn-181 contributes to the Mg(2+) binding site.

It belongs to the transketolase family. DXPS subfamily. Homodimer. It depends on Mg(2+) as a cofactor. The cofactor is thiamine diphosphate.

It carries out the reaction D-glyceraldehyde 3-phosphate + pyruvate + H(+) = 1-deoxy-D-xylulose 5-phosphate + CO2. It functions in the pathway metabolic intermediate biosynthesis; 1-deoxy-D-xylulose 5-phosphate biosynthesis; 1-deoxy-D-xylulose 5-phosphate from D-glyceraldehyde 3-phosphate and pyruvate: step 1/1. Its function is as follows. Catalyzes the acyloin condensation reaction between C atoms 2 and 3 of pyruvate and glyceraldehyde 3-phosphate to yield 1-deoxy-D-xylulose-5-phosphate (DXP). This Shewanella oneidensis (strain ATCC 700550 / JCM 31522 / CIP 106686 / LMG 19005 / NCIMB 14063 / MR-1) protein is 1-deoxy-D-xylulose-5-phosphate synthase.